The following is a 157-amino-acid chain: Small ribosomal subunit protein uS7 (157 aa).

Belongs to the universal ribosomal protein uS7 family. In terms of assembly, part of the 30S ribosomal subunit. Contacts proteins S9 and S11.

In terms of biological role, one of the primary rRNA binding proteins, it binds directly to 16S rRNA where it nucleates assembly of the head domain of the 30S subunit. Is located at the subunit interface close to the decoding center, probably blocks exit of the E-site tRNA. The sequence is that of Small ribosomal subunit protein uS7 from Eikenella corrodens.